Here is a 361-residue protein sequence, read N- to C-terminus: Peptide chain release factor 1 (361 aa).

The residue at position 237 (Q237) is an N5-methylglutamine. A compositionally biased stretch (basic and acidic residues) spans 285–296 (DEKRRSAEESTR). Positions 285 to 305 (DEKRRSAEESTRRNLVGSGDR) are disordered.

Belongs to the prokaryotic/mitochondrial release factor family. Post-translationally, methylated by PrmC. Methylation increases the termination efficiency of RF1.

It is found in the cytoplasm. Its function is as follows. Peptide chain release factor 1 directs the termination of translation in response to the peptide chain termination codons UAG and UAA. The polypeptide is Peptide chain release factor 1 (Shewanella sediminis (strain HAW-EB3)).